Reading from the N-terminus, the 106-residue chain is UPF0145 protein CLL_A2504 (106 aa).

Belongs to the UPF0145 family.

The chain is UPF0145 protein CLL_A2504 from Clostridium botulinum (strain Eklund 17B / Type B).